Consider the following 191-residue polypeptide: Guanylate kinase (191 aa).

The Guanylate kinase-like domain maps to 4–182 (GRLIVVSGPS…AREEMIEIMR (179 aa)). 11–18 (GPSGAGKS) serves as a coordination point for ATP.

Belongs to the guanylate kinase family.

It localises to the cytoplasm. The catalysed reaction is GMP + ATP = GDP + ADP. Its function is as follows. Essential for recycling GMP and indirectly, cGMP. The sequence is that of Guanylate kinase from Rubrobacter xylanophilus (strain DSM 9941 / JCM 11954 / NBRC 16129 / PRD-1).